A 605-amino-acid chain; its full sequence is Acetoin dehydrogenase operon transcriptional activator AcoR (605 aa).

The 226-residue stretch at 295–520 (VIGQSGRSQA…LFNVFERLSI (226 aa)) folds into the Sigma-54 factor interaction domain. ATP-binding positions include 323–330 (GETGTGKE) and 387–396 (ANQGTLFLDE). Positions 578-597 (VSQAAKISGIPRSTFYKRLK) form a DNA-binding region, H-T-H motif.

In terms of biological role, acts as a transcriptional activator of the acoABCL operon encoding the acetoin dehydrogenase complex. The sequence is that of Acetoin dehydrogenase operon transcriptional activator AcoR (acoR) from Bacillus subtilis (strain 168).